A 189-amino-acid polypeptide reads, in one-letter code: NADH dehydrogenase [ubiquinone] 1 beta subcomplex subunit 5, mitochondrial (189 aa).

The N-terminal 46 residues, 1–46 (MAGMSLLRRVSVTAVAALSGRSLGTRLGFGGFLTRGFPKAVAPVRH), are a transit peptide targeting the mitochondrion. A helical transmembrane segment spans residues 73–93 (FYIALTGIPVVIIITLVNVFI).

Belongs to the complex I NDUFB5 subunit family. Complex I is composed of 45 different subunits.

Its subcellular location is the mitochondrion inner membrane. In terms of biological role, accessory subunit of the mitochondrial membrane respiratory chain NADH dehydrogenase (Complex I), that is believed not to be involved in catalysis. Complex I functions in the transfer of electrons from NADH to the respiratory chain. The immediate electron acceptor for the enzyme is believed to be ubiquinone. The protein is NADH dehydrogenase [ubiquinone] 1 beta subcomplex subunit 5, mitochondrial (NDUFB5) of Macaca fascicularis (Crab-eating macaque).